We begin with the raw amino-acid sequence, 375 residues long: MQCALYDAGRCRSCQWITQPIPEQLSAKTADLKNLLADFPVEEWCAPVSGPEQGFRNKAKMVVSGSVEKPLLGMLHRDGTPEDLCDCPLYPASFAPVFAALKPFIARAGLTPYNVARKRGELKYILLTESQSDGGMMLRFVLRSETKLAQLRKALPWLQEQLPQLKVITVNIQPVHMAIMEGETEIYLTEQQALADRFNDVPLWIRPQSFFQTNPAVASQLYATARDWVRQLPVNHMWDLFCGVGGFGLHCATPDMQLTGIEIAPEAIACAKQSAAELGLTRLQFQALDSTQFATAQGEVPELVLVNPPRRGIGKPLCDYLSTMAPRFIIYSSCNAQTMAKDIRELPGYRIERVQLFDMFPHTAHYEVLTLLVKM.

[4Fe-4S] cluster contacts are provided by Cys3, Cys11, Cys14, and Cys87. 4 residues coordinate S-adenosyl-L-methionine: Gln212, Phe241, Glu262, and Asn307. Cys334 (nucleophile) is an active-site residue.

This sequence belongs to the class I-like SAM-binding methyltransferase superfamily. RNA M5U methyltransferase family. RlmC subfamily.

It catalyses the reaction uridine(747) in 23S rRNA + S-adenosyl-L-methionine = 5-methyluridine(747) in 23S rRNA + S-adenosyl-L-homocysteine + H(+). Functionally, catalyzes the formation of 5-methyl-uridine at position 747 (m5U747) in 23S rRNA. The chain is 23S rRNA (uracil(747)-C(5))-methyltransferase RlmC from Escherichia coli O17:K52:H18 (strain UMN026 / ExPEC).